Consider the following 73-residue polypeptide: Sec-independent protein translocase protein TatA (73 aa).

The chain crosses the membrane as a helical span at residues 1 to 21 (MGSFSIWHWLIVLVIVMLVFG). The tract at residues 50–73 (KEQIQQSSATAEKTVDVQAKDVNK) is disordered. Residues 62–73 (KTVDVQAKDVNK) are compositionally biased toward basic and acidic residues.

The protein belongs to the TatA/E family. In terms of assembly, the Tat system comprises two distinct complexes: a TatABC complex, containing multiple copies of TatA, TatB and TatC subunits, and a separate TatA complex, containing only TatA subunits. Substrates initially bind to the TatABC complex, which probably triggers association of the separate TatA complex to form the active translocon.

It localises to the cell inner membrane. Its function is as follows. Part of the twin-arginine translocation (Tat) system that transports large folded proteins containing a characteristic twin-arginine motif in their signal peptide across membranes. TatA could form the protein-conducting channel of the Tat system. The chain is Sec-independent protein translocase protein TatA from Polynucleobacter necessarius subsp. necessarius (strain STIR1).